The sequence spans 395 residues: MKQIEGGICAVRGVSAYGIKPGKMGIAVIRAEGPAAGVFTRNKVVAAPVTLSRERIETEHRLSAVIANSGNANAFTGDDGFLDAMEMASMVAENLGLDPDNVAVASTGVIGRRLDVSFIKEHLPEVLEGLGSSPECSRAAAKAIMTTDRALKESAVELDCGVRIGAIAKGSGMIEPNMGTMLCFAYTDAKVPADVLDAALKIAVDKTFNMVVVDGDTSTNDMVLFTSTCKSGVKPCLDCLDDFEEGLVCVFTDLAKKMAKDGEGATKLIEARVTGAKKYEDARLVAKTIVRSPLVKSAIFGKDPNWGRVVAAAGYSGAELEQERLTLSFSGGGEEVELVKAGEISTASDLSLLKKIMANDEIIINLDLAMGEESATAWGCDLTYDYVRINAEYTT.

Substrate is bound by residues Thr-146, Lys-169, Thr-180, Glu-263, Asn-390, and Thr-395. Thr-180 acts as the Nucleophile in catalysis.

Belongs to the ArgJ family. As to quaternary structure, heterotetramer of two alpha and two beta chains.

The protein resides in the cytoplasm. It catalyses the reaction N(2)-acetyl-L-ornithine + L-glutamate = N-acetyl-L-glutamate + L-ornithine. Its pathway is amino-acid biosynthesis; L-arginine biosynthesis; L-ornithine and N-acetyl-L-glutamate from L-glutamate and N(2)-acetyl-L-ornithine (cyclic): step 1/1. Its function is as follows. Catalyzes the transfer of the acetyl group from N(2)-acetylornithine to glutamate, forming N-acetylglutamate and L-ornithine. This chain is Glutamate N-acetyltransferase, found in Methanosarcina mazei (strain ATCC BAA-159 / DSM 3647 / Goe1 / Go1 / JCM 11833 / OCM 88) (Methanosarcina frisia).